The primary structure comprises 194 residues: ATP-dependent Clp protease proteolytic subunit 1 (194 aa).

Ser99 acts as the Nucleophile in catalysis. The active site involves His124.

This sequence belongs to the peptidase S14 family. As to quaternary structure, fourteen ClpP subunits assemble into 2 heptameric rings which stack back to back to give a disk-like structure with a central cavity, resembling the structure of eukaryotic proteasomes.

The protein resides in the cytoplasm. The catalysed reaction is Hydrolysis of proteins to small peptides in the presence of ATP and magnesium. alpha-casein is the usual test substrate. In the absence of ATP, only oligopeptides shorter than five residues are hydrolyzed (such as succinyl-Leu-Tyr-|-NHMec, and Leu-Tyr-Leu-|-Tyr-Trp, in which cleavage of the -Tyr-|-Leu- and -Tyr-|-Trp bonds also occurs).. Its function is as follows. Cleaves peptides in various proteins in a process that requires ATP hydrolysis. Has a chymotrypsin-like activity. Plays a major role in the degradation of misfolded proteins. This chain is ATP-dependent Clp protease proteolytic subunit 1, found in Borreliella burgdorferi (strain ATCC 35210 / DSM 4680 / CIP 102532 / B31) (Borrelia burgdorferi).